The primary structure comprises 689 residues: DNA ligase (689 aa).

NAD(+)-binding positions include 32-36 (DAEYD), 81-82 (SL), and Glu113. The active-site N6-AMP-lysine intermediate is Lys115. Residues Arg136, Glu176, Lys306, and Lys330 each coordinate NAD(+). The Zn(2+) site is built by Cys424, Cys427, Cys442, and Cys448. The 84-residue stretch at 606 to 689 (AEELPLAEQI…ALLAEHGITI (84 aa)) folds into the BRCT domain.

This sequence belongs to the NAD-dependent DNA ligase family. LigA subfamily. Mg(2+) serves as cofactor. It depends on Mn(2+) as a cofactor.

The catalysed reaction is NAD(+) + (deoxyribonucleotide)n-3'-hydroxyl + 5'-phospho-(deoxyribonucleotide)m = (deoxyribonucleotide)n+m + AMP + beta-nicotinamide D-nucleotide.. Functionally, DNA ligase that catalyzes the formation of phosphodiester linkages between 5'-phosphoryl and 3'-hydroxyl groups in double-stranded DNA using NAD as a coenzyme and as the energy source for the reaction. It is essential for DNA replication and repair of damaged DNA. The chain is DNA ligase from Colwellia psychrerythraea (strain 34H / ATCC BAA-681) (Vibrio psychroerythus).